The chain runs to 254 residues: 3-deoxy-manno-octulosonate cytidylyltransferase (254 aa).

The protein belongs to the KdsB family.

The protein resides in the cytoplasm. The catalysed reaction is 3-deoxy-alpha-D-manno-oct-2-ulosonate + CTP = CMP-3-deoxy-beta-D-manno-octulosonate + diphosphate. Its pathway is nucleotide-sugar biosynthesis; CMP-3-deoxy-D-manno-octulosonate biosynthesis; CMP-3-deoxy-D-manno-octulosonate from 3-deoxy-D-manno-octulosonate and CTP: step 1/1. It functions in the pathway bacterial outer membrane biogenesis; lipopolysaccharide biosynthesis. Its function is as follows. Activates KDO (a required 8-carbon sugar) for incorporation into bacterial lipopolysaccharide in Gram-negative bacteria. In Ectopseudomonas mendocina (strain ymp) (Pseudomonas mendocina), this protein is 3-deoxy-manno-octulosonate cytidylyltransferase.